The following is a 419-amino-acid chain: UDP-N-acetylglucosamine 1-carboxyvinyltransferase (419 aa).

Residue 22 to 23 (KN) participates in phosphoenolpyruvate binding. A UDP-N-acetyl-alpha-D-glucosamine-binding site is contributed by Arg95. Catalysis depends on Cys119, which acts as the Proton donor. Residue Cys119 is modified to 2-(S-cysteinyl)pyruvic acid O-phosphothioketal. UDP-N-acetyl-alpha-D-glucosamine is bound by residues 164–167 (KVSV), Asp308, and Ile330.

This sequence belongs to the EPSP synthase family. MurA subfamily.

The protein localises to the cytoplasm. It catalyses the reaction phosphoenolpyruvate + UDP-N-acetyl-alpha-D-glucosamine = UDP-N-acetyl-3-O-(1-carboxyvinyl)-alpha-D-glucosamine + phosphate. The protein operates within cell wall biogenesis; peptidoglycan biosynthesis. In terms of biological role, cell wall formation. Adds enolpyruvyl to UDP-N-acetylglucosamine. This Rickettsia peacockii (strain Rustic) protein is UDP-N-acetylglucosamine 1-carboxyvinyltransferase.